The primary structure comprises 495 residues: Meiosis-specific nuclear structural protein 1 (495 aa).

The tract at residues 1–314 is interaction with BBOF1; the sequence is MGSKRRNLSC…KLEEMLRQRE (314 aa). A coiled-coil region spans residues 28 to 410; it reads VQALKNVNSQ…QLEHRRAVEK (383 aa). At tyrosine 188 the chain carries Phosphotyrosine.

This sequence belongs to the MNS1 family. In terms of assembly, able to form oligomers. Microtubule inner protein component of sperm flagellar doublet microtubules. Interacts with ODAD1. Interacts with BBOF1. Expressed in nasal respiratory epithelium and in the sperm.

The protein localises to the nucleus. Its subcellular location is the cytoplasm. It localises to the cytoskeleton. It is found in the cilium axoneme. The protein resides in the flagellum axoneme. Its function is as follows. Microtubule inner protein (MIP) part of the dynein-decorated doublet microtubules (DMTs) in cilia axoneme, which is required for motile cilia beating. May play a role in the control of meiotic division and germ cell differentiation through regulation of pairing and recombination during meiosis. Required for sperm flagella assembly. May play a role in the assembly and function of the outer dynein arm-docking complex (ODA-DC). ODA-DC mediates outer dynein arms (ODA) binding onto the axonemal doublet microtubules. The polypeptide is Meiosis-specific nuclear structural protein 1 (Homo sapiens (Human)).